The primary structure comprises 74 residues: RNA-binding protein Hfq (74 aa).

Residues 9-69 (DQYLNQLRKN…ISTFSPVKNV (61 aa)) form the Sm domain.

It belongs to the Hfq family. Homohexamer.

Functionally, RNA chaperone that binds small regulatory RNA (sRNAs) and mRNAs to facilitate mRNA translational regulation in response to envelope stress, environmental stress and changes in metabolite concentrations. Also binds with high specificity to tRNAs. In Oceanobacillus iheyensis (strain DSM 14371 / CIP 107618 / JCM 11309 / KCTC 3954 / HTE831), this protein is RNA-binding protein Hfq.